The primary structure comprises 320 residues: Ferrochelatase (320 aa).

Positions 194 and 275 each coordinate Fe cation.

This sequence belongs to the ferrochelatase family. Monomer.

It localises to the cytoplasm. The catalysed reaction is heme b + 2 H(+) = protoporphyrin IX + Fe(2+). The protein operates within porphyrin-containing compound metabolism; protoheme biosynthesis; protoheme from protoporphyrin-IX: step 1/1. Functionally, catalyzes the ferrous insertion into protoporphyrin IX. In Shigella boydii serotype 4 (strain Sb227), this protein is Ferrochelatase.